The following is a 177-amino-acid chain: MSEFVTVARPYAKAAFDFAVEHQSVERWQDMLAFAAEVTKNEQMAELLSGALAPETLAESFIAVCGEQLDENGQNLIRVMAENNRLNALPDVLEQFIHLRAASEATSEVEVTSATALSEEQLSKISAAMEKRLSRKVKLNCKIDKSVMAGVIIRAGDMVIDGSVRGRLERLADVLQS.

Belongs to the ATPase delta chain family. In terms of assembly, F-type ATPases have 2 components, F(1) - the catalytic core - and F(0) - the membrane proton channel. F(1) has five subunits: alpha(3), beta(3), gamma(1), delta(1), epsilon(1). F(0) has three main subunits: a(1), b(2) and c(10-14). The alpha and beta chains form an alternating ring which encloses part of the gamma chain. F(1) is attached to F(0) by a central stalk formed by the gamma and epsilon chains, while a peripheral stalk is formed by the delta and b chains.

It is found in the cell inner membrane. In terms of biological role, f(1)F(0) ATP synthase produces ATP from ADP in the presence of a proton or sodium gradient. F-type ATPases consist of two structural domains, F(1) containing the extramembraneous catalytic core and F(0) containing the membrane proton channel, linked together by a central stalk and a peripheral stalk. During catalysis, ATP synthesis in the catalytic domain of F(1) is coupled via a rotary mechanism of the central stalk subunits to proton translocation. Functionally, this protein is part of the stalk that links CF(0) to CF(1). It either transmits conformational changes from CF(0) to CF(1) or is implicated in proton conduction. This chain is ATP synthase subunit delta, found in Salmonella agona (strain SL483).